The chain runs to 326 residues: Polycomb complex protein BMI-1-A (326 aa).

An RING-type zinc finger spans residues 18–57 (CVLCGGYFIDATTIIECLHSFCKTCIVRYLETSKYCPICD). The short motif at 81–95 (KLVPGLFKGEMKRRR) is the Nuclear localization signal element. Disordered stretches follow at residues 239-262 (NPHT…DKAG) and 274-326 (CIPS…ISSG). Positions 290–303 (ISSTINGTSSSSSS) are enriched in low complexity.

In terms of assembly, component of a PRC1-like complex. Interacts with cbx4.

The protein localises to the nucleus. Component of a Polycomb group (PcG) multiprotein PRC1-like complex, a complex class required to maintain the transcriptionally repressive state of many genes, including Hox genes, throughout development. PcG PRC1 complex acts via chromatin remodeling and modification of histones; it mediates monoubiquitination of histone H2A 'Lys-119', rendering chromatin heritably changed in its expressibility. In the PRC1 complex, it is required to stimulate the E3 ubiquitin-protein ligase activity of rnf2. This Xenopus laevis (African clawed frog) protein is Polycomb complex protein BMI-1-A (bmi1a).